The following is an 89-amino-acid chain: Acylphosphatase (89 aa).

An Acylphosphatase-like domain is found at 4–89; the sequence is SYIAHISGRV…WQEHHFFSIG (86 aa). Active-site residues include arginine 19 and asparagine 37.

Belongs to the acylphosphatase family.

It carries out the reaction an acyl phosphate + H2O = a carboxylate + phosphate + H(+). This is Acylphosphatase (acyP) from Colwellia psychrerythraea (strain 34H / ATCC BAA-681) (Vibrio psychroerythus).